A 379-amino-acid chain; its full sequence is Flagellar P-ring protein (379 aa).

The first 32 residues, 1 to 32, serve as a signal peptide directing secretion; that stretch reads MTAPAGFLPRVGRLIAVALTAVFLLAPTGAEA.

Belongs to the FlgI family. As to quaternary structure, the basal body constitutes a major portion of the flagellar organelle and consists of four rings (L,P,S, and M) mounted on a central rod.

It is found in the periplasm. The protein localises to the bacterial flagellum basal body. In terms of biological role, assembles around the rod to form the L-ring and probably protects the motor/basal body from shearing forces during rotation. The polypeptide is Flagellar P-ring protein (Rhodospirillum rubrum (strain ATCC 11170 / ATH 1.1.1 / DSM 467 / LMG 4362 / NCIMB 8255 / S1)).